The following is a 282-amino-acid chain: Bifunctional protein FolD (282 aa).

Residues 164-166 (GAS), I189, and I230 each bind NADP(+).

Belongs to the tetrahydrofolate dehydrogenase/cyclohydrolase family. Homodimer.

The enzyme catalyses (6R)-5,10-methylene-5,6,7,8-tetrahydrofolate + NADP(+) = (6R)-5,10-methenyltetrahydrofolate + NADPH. The catalysed reaction is (6R)-5,10-methenyltetrahydrofolate + H2O = (6R)-10-formyltetrahydrofolate + H(+). It functions in the pathway one-carbon metabolism; tetrahydrofolate interconversion. In terms of biological role, catalyzes the oxidation of 5,10-methylenetetrahydrofolate to 5,10-methenyltetrahydrofolate and then the hydrolysis of 5,10-methenyltetrahydrofolate to 10-formyltetrahydrofolate. This chain is Bifunctional protein FolD, found in Campylobacter jejuni (strain RM1221).